A 394-amino-acid chain; its full sequence is C-19 steroid 1alpha-hydroxylase (394 aa).

Heme b is bound by residues His-81, Arg-85, Arg-281, Gly-335, His-338, and Cys-340.

Belongs to the cytochrome P450 family. Heme b serves as cofactor.

It catalyses the reaction testosterone + 2 reduced [2Fe-2S]-[ferredoxin] + O2 + 2 H(+) = 1alpha-hydroxytestosterone + 2 oxidized [2Fe-2S]-[ferredoxin] + H2O. It carries out the reaction androst-4-ene-3,17-dione + 2 reduced [2Fe-2S]-[ferredoxin] + O2 + 2 H(+) = 1alpha-hydroxyandrost-4-ene-3,17-dione + 2 oxidized [2Fe-2S]-[ferredoxin] + H2O. In terms of biological role, hydroxylase that can catalyze the in vitro conversion of the sesquiterpenoid nootkatone, a natural organic compound produced by some plants, to at least five hydrophilic products. The native ferredoxin reductase FdR_B and either Fdx2 or Fdx8 ferredoxins can act as the redox partners for the conversion of nootkatone. Its function is as follows. In addition, acts as a steroid 1alpha-hydroxylase, when associated in vitro with the surrogate redox partners bovine adrenodoxin (Adx) and adrenodoxin reductase (Adr). Acts on several C-19 steroid substrates, including testosterone and androstenedione, which are hydroxylated to 1alpha-hydroxytestosterone and 1alpha-hydroxyandrostenedione, respectively. Can use their derivatives testosterone-acetate and 11-oxoandrostenedione, but not vitamin D3 and 25-hydroxyvitamin D3. Also catalyzes the hydroxylation of the C-21 steroid 11-deoxycorticosterone to 1alpha-hydroxy-11-deoxycorticosterone. Catalyzes the hydroxylation of the C-21 steroid progesterone, leading to the formation of seven products: two major (1alpha-hydroxyprogesterone and 17alpha-hydroxyprogesterone) and five minor products. The chain is C-19 steroid 1alpha-hydroxylase from Sorangium cellulosum (strain So ce56) (Polyangium cellulosum (strain So ce56)).